We begin with the raw amino-acid sequence, 338 residues long: Serpentine receptor class alpha-32 (338 aa).

A run of 7 helical transmembrane segments spans residues 30 to 50, 63 to 83, 120 to 140, 152 to 172, 199 to 219, 249 to 269, and 289 to 309; these read VYVIYIDLVLILALFLSIHAI, ITHLLIASLVYGNVHNASYTI, RFLFIAIELALNVDRIIVILF, GEILNILAVILSFALGCLLHL, LTSYTILSACCAALDFLMMWY, LNSLLQLFVTSIYAISMFVLA, and TTPYSTLLVPIQIKVFIQWIG.

This sequence belongs to the nematode receptor-like protein sra family.

It is found in the membrane. This chain is Serpentine receptor class alpha-32 (sra-32), found in Caenorhabditis elegans.